Here is a 643-residue protein sequence, read N- to C-terminus: Complement component C1q receptor (643 aa).

A signal peptide spans 1 to 23 (MVTSTGLLLLLGLLGQLWAGAAA). The Extracellular segment spans residues 24–571 (DSEAVVCEGT…HSDSDTDGQK (548 aa)). In terms of domain architecture, C-type lectin spans 31-173 (EGTACYTAHW…CGTPDAPGNS (143 aa)). 16 disulfide bridges follow: Cys-140/Cys-164, Cys-261/Cys-272, Cys-268/Cys-282, Cys-284/Cys-297, Cys-303/Cys-314, Cys-308/Cys-325, Cys-327/Cys-340, Cys-346/Cys-355, Cys-351/Cys-364, Cys-366/Cys-380, Cys-386/Cys-397, Cys-393/Cys-406, Cys-408/Cys-422, Cys-428/Cys-437, Cys-433/Cys-446, and Cys-448/Cys-461. EGF-like domains are found at residues 257 to 298 (PKFG…VTCA) and 299 to 341 (SRNP…VHCV). Asn-322 carries an N-linked (GlcNAc...) asparagine glycan. One can recognise an EGF-like 3; calcium-binding domain in the interval 342–381 (DIDECEDSPCDQECINTPGGFHCECWVGYQSSGSKEEACE). In terms of domain architecture, EGF-like 4; calcium-binding spans 382 to 423 (DVDECTAAYSPCAQGCTNTDGSFYCSCKEGYIMSGEDSTQCE). The EGF-like 5; calcium-binding domain occupies 424 to 462 (DIDECLGNPCDTLCINTDGSFRCGCPAGFELAPNGVSCT). The interval 469–517 (ELPARPPQKEDKGDGKESTVPLTEMPGSLNGSKDVSNRAQTTDLSIQSD) is disordered. Over residues 475-485 (PQKEDKGDGKE) the composition is skewed to basic and acidic residues. Positions 497–517 (LNGSKDVSNRAQTTDLSIQSD) are enriched in polar residues. Asn-498 carries N-linked (GlcNAc...) asparagine glycosylation. The chain crosses the membrane as a helical span at residues 572 to 592 (LLLFYILGTVVAISLLLALAL). Over 593-643 (GLLIYLKRKAKKEEIKEKKAQNAADSYSWIPERAESRAPENQYSPTPGTDC) the chain is Cytoplasmic. Positions 606 to 643 (EIKEKKAQNAADSYSWIPERAESRAPENQYSPTPGTDC) are disordered. Residue Ser-618 is modified to Phosphoserine. Tyr-619 and Tyr-635 each carry phosphotyrosine. Over residues 631 to 643 (PENQYSPTPGTDC) the composition is skewed to polar residues.

Homodimer. Interacts with C1QBP; the association may represent a cell surface C1q receptor. Interacts with surfactant protein A/SFTPA1. Interacts with multimerin-2/MMRN2. Interacts with DAG1; this interaction plays an important role in endothelial cell migration. Interacts with CBL. Interacts with IGFBP7. Interacts with VEGFR2. N- and O-glycosylated. In terms of processing, phosphorylated on Tyr-619 and Tyr-635 by SRC; these phosphorylations promote endothelial cell adhesion and migration. As to expression, widely expressed. Highly expressed in lung and heart. Expressed at lower level in brain, thymus, liver, spleen, intestine, kidney, adrenal gland, muscle and testis. Expressed on endothelial cells, platelets, undifferentiated monocytes and circulating natural killer cells.

Its subcellular location is the cell membrane. Cell surface receptor that plays a role in various physiological processes including inflammation, phagocytosis, and cell adhesion. Plays a role in phagocytosis and enhances the uptake of apoptotic cells and immune complexes by acting as a receptor for defense collagens including surfactant protein A/SFTPA1, C1q, and mannose-binding lectin (MBL2). Plays a role in the regulation of endothelial cell function and adhesion by activating angiogenesis. Mechanistically, exerts its angiogenic function by associating with beta-dystroglycan, leading to SRC-dependent phosphorylation and subsequent recruitment of CBL. In turn, CBL provides a docking site for downstream signaling components, such as CRKL to enhance cell migration. Participates in angiogenesis also by acting as a receptor for the ECM pan-endothelial glycoprotein multimerin-2/MMRN2 and IGFBP7 ligands. Both ligands play a non-redundant role in CD93-mediated endothelial cell function. Acts as a key regulator of endothelial barrier function through modulating VEGFR2 function. This chain is Complement component C1q receptor (Cd93), found in Rattus norvegicus (Rat).